We begin with the raw amino-acid sequence, 547 residues long: MAAKDVVFGDAARAKMVEGVNILANAVKVTLGPKGRNVVLERSFGGPTVTKDGVSVAKEIELKDKLQNMGAQMVKEVASKTSDNAGDGTTTATVLAQSIVREGMKFVAAGMNPMDLKRGIDKAVAAAVEELKKVSKPTTTSKEIAQVGAISANSDTSIGERIAEAMDKVGKEGVITVEDGKSLADELEVVEGMQFDRGYLSPYFINNPEKQVVQLDSPFVLLFDKKVSNIRDLLPVLEQVAKAGRPLLIIAEDVEGEALATLVVNNIRGILKTAAVKAPGFGDRRKAMLEDIAILTGGTVIAEEIGLTLEKATLNDLGQAKRIEIGKENTIIIDGAGDAAAIEGRVKQIRAQIEEATSDYDREKLQERVAKLAGGVAVIKVGAATEVEMKEKKARVEDALHATRAAVEEGIVPGGGVALLRARAAISALTGENPDQNAGIKIVLRAMEEPLRQIVLNAGEEASVVVAKVIEGKGNYGYNAASGEYGDLVEMGVLDPTKVTRTALQNAASVASLMLTTDCAVAETPKEESAPAMPGGMGGMGGMEGMM.

ATP is bound by residues 30–33 (TLGP), Lys-51, 87–91 (DGTTT), Gly-415, 479–481 (NAA), and Asp-495.

Belongs to the chaperonin (HSP60) family. In terms of assembly, forms a cylinder of 14 subunits composed of two heptameric rings stacked back-to-back. Interacts with the co-chaperonin GroES.

It localises to the cytoplasm. The enzyme catalyses ATP + H2O + a folded polypeptide = ADP + phosphate + an unfolded polypeptide.. In terms of biological role, together with its co-chaperonin GroES, plays an essential role in assisting protein folding. The GroEL-GroES system forms a nano-cage that allows encapsulation of the non-native substrate proteins and provides a physical environment optimized to promote and accelerate protein folding. In Cupriavidus pinatubonensis (strain JMP 134 / LMG 1197) (Cupriavidus necator (strain JMP 134)), this protein is Chaperonin GroEL.